Here is a 75-residue protein sequence, read N- to C-terminus: Metallothionein-like protein 1 (75 aa).

The protein belongs to the metallothionein superfamily. Type 15 family.

Its function is as follows. Metallothioneins have a high content of cysteine residues that bind various heavy metals. In Triticum aestivum (Wheat), this protein is Metallothionein-like protein 1 (ALI1).